Here is a 215-residue protein sequence, read N- to C-terminus: MKFFLDTANVEKIKEFNALGLVDGVTTNPSLIKKEGRDFYEVIKEICSIVKGPVSAEVIALDAEGMIKEAKELVKIAENVVIKIPMTKEGMKAVNILSKEGIKTNVTLIFSANQALLAAKAGATYVSPFVGRLDDIGQDGLLLISEIMQIFSAYGIETEVIVASVRHPIHVTESAKMGADVATIPFDVLDKLFNHSLTDIGIEKFLADWDAHLKR.

The active-site Schiff-base intermediate with substrate is Lys-83.

Belongs to the transaldolase family. Type 3B subfamily.

It localises to the cytoplasm. It carries out the reaction D-sedoheptulose 7-phosphate + D-glyceraldehyde 3-phosphate = D-erythrose 4-phosphate + beta-D-fructose 6-phosphate. It functions in the pathway carbohydrate degradation; pentose phosphate pathway; D-glyceraldehyde 3-phosphate and beta-D-fructose 6-phosphate from D-ribose 5-phosphate and D-xylulose 5-phosphate (non-oxidative stage): step 2/3. In terms of biological role, transaldolase is important for the balance of metabolites in the pentose-phosphate pathway. This is Probable transaldolase from Methanococcus vannielii (strain ATCC 35089 / DSM 1224 / JCM 13029 / OCM 148 / SB).